Reading from the N-terminus, the 244-residue chain is DNA repair protein RecO (244 aa).

Belongs to the RecO family.

Functionally, involved in DNA repair and RecF pathway recombination. The protein is DNA repair protein RecO of Caldicellulosiruptor bescii (strain ATCC BAA-1888 / DSM 6725 / KCTC 15123 / Z-1320) (Anaerocellum thermophilum).